The chain runs to 502 residues: MQVPYLEFDNVSKSFPGVKALQNISFKCYEGKVHALMGENGAGKSTLLKILSGNYLPSEGKLSIGGRQLVFRNTKEALLAGVAIIYQELNIVPEMTVAENLCLGQLPHSFGIVDKAELIERTQQYLDKLDLNISPNTPLKELSIGQWQMIEIAKALSRGAKIIAFDEPTSSLSAPEIEKLFSVINELRDEGKVILYVSHRMEEIFRISDEITVLKDGQFVETFSDLSKITNDDLVRSMVGRNLGDIYHYRPREVGDVRLKIAHLSGEKLQGDFSLTVRAGEVLGLFGLVGAGRSELLKVIFGADPCVSGSIELDGKTLSIRSPKDAIEQGIVLCPEDRKKEGIVPTASVGENINISARRLHNFFKFIINDKWEKKNAEKQRQQMNVKTPSIEQLIVNLSGGNQQKAILGRWLSEDIKVLLLDEPTRGIDVGAKSEIYDLIFKLADQKLAIIVVSSDLPEVIGVSDRIMVMRAHQITGVVERADATEEKVLKLAMVESLNVGD.

ABC transporter domains lie at 6 to 241 (LEFD…MVGR) and 252 to 497 (REVG…MVES). 38–45 (GENGAGKS) provides a ligand contact to ATP.

This sequence belongs to the ABC transporter superfamily. Arabinose importer (TC 3.A.1.2.2) family. As to quaternary structure, the complex is composed of two ATP-binding proteins (AraG), two transmembrane proteins (AraH) and a solute-binding protein (AraF).

It is found in the cell inner membrane. It catalyses the reaction L-arabinose(out) + ATP + H2O = L-arabinose(in) + ADP + phosphate + H(+). Its function is as follows. Part of the ABC transporter complex AraFGH involved in arabinose import. Responsible for energy coupling to the transport system. The protein is Arabinose import ATP-binding protein AraG of Mannheimia succiniciproducens (strain KCTC 0769BP / MBEL55E).